We begin with the raw amino-acid sequence, 97 residues long: Large ribosomal subunit protein eL21 (97 aa).

Residues 1–24 (MVQKAHSFRRKTRKKLRKHPRRRG) show a composition bias toward basic residues. Residues 1–25 (MVQKAHSFRRKTRKKLRKHPRRRGL) form a disordered region.

This sequence belongs to the eukaryotic ribosomal protein eL21 family.

This is Large ribosomal subunit protein eL21 (rpl21e) from Pyrococcus abyssi (strain GE5 / Orsay).